A 631-amino-acid chain; its full sequence is Nucleoside triphosphatase I (631 aa).

Residues 42 to 204 (FLGLDSMHSL…TMLVNLLRPG (163 aa)) form the Helicase ATP-binding domain. 55–62 (HETGVGKT) lines the ATP pocket. The short motif at 141-144 (DECH) is the DEXH box element. The Helicase C-terminal domain occupies 367–532 (KFIDVCLGIL…EFVQLFRVFK (166 aa)). Residues 457–524 (DIFILDMTWN…EIIQSKSKEF (68 aa)) are binding to the cap-specific mRNA (nucleoside-2'-O-)-methyltransferase.

The protein belongs to the helicase family. NPH I subfamily. As to quaternary structure, monomer. Interacts (via C-terminus) with RAP94/OPG109 (via N-terminus). Interacts with the cap-specific mRNA (nucleoside-2'-O-)-methyltransferase OPG102.

The protein resides in the virion. The catalysed reaction is a ribonucleoside 5'-triphosphate + H2O = a ribonucleoside 5'-diphosphate + phosphate + H(+). Functionally, DNA-dependent ATPase that acts as a 5' to 3' translocase on single-stranded DNA and thereby plays a role in transcription termination of viral early genes. Uses forward translocation in concert with the viral RNA polymerase RAP94/OPG109 subunit and the capping enzyme/VTF to catalyze release of UUUUUNU-containing nascent RNA from the elongation complex. In addition, acts as a positive elongation factor to assist transcription through problematic sequences. The chain is Nucleoside triphosphatase I (OPG123) from Variola virus (isolate Human/India/Ind3/1967) (VARV).